We begin with the raw amino-acid sequence, 313 residues long: HPr kinase/phosphorylase (313 aa).

Residues His140 and Lys161 contribute to the active site. 155–162 (GNSGAGKS) is a binding site for ATP. Ser162 serves as a coordination point for Mg(2+). The active-site Proton acceptor; for phosphorylation activity. Proton donor; for dephosphorylation activity is the Asp179. The tract at residues 203–212 (IEVRGLGILN) is important for the catalytic mechanism of both phosphorylation and dephosphorylation. Mg(2+) is bound at residue Glu204. Arg246 is an active-site residue. The important for the catalytic mechanism of dephosphorylation stretch occupies residues 267–272 (PVAAGR).

It belongs to the HPrK/P family. In terms of assembly, homohexamer. Requires Mg(2+) as cofactor.

The catalysed reaction is [HPr protein]-L-serine + ATP = [HPr protein]-O-phospho-L-serine + ADP + H(+). The enzyme catalyses [HPr protein]-O-phospho-L-serine + phosphate + H(+) = [HPr protein]-L-serine + diphosphate. In terms of biological role, catalyzes the ATP- as well as the pyrophosphate-dependent phosphorylation of a specific serine residue in HPr, a phosphocarrier protein of the phosphoenolpyruvate-dependent sugar phosphotransferase system (PTS). HprK/P also catalyzes the pyrophosphate-producing, inorganic phosphate-dependent dephosphorylation (phosphorolysis) of seryl-phosphorylated HPr (P-Ser-HPr). The protein is HPr kinase/phosphorylase of Azoarcus sp. (strain BH72).